The chain runs to 372 residues: Cytochrome b (372 aa).

The next 4 helical transmembrane spans lie at 25-45 (FGSM…FLAI), 69-90 (WIMQ…YTHI), 105-125 (WLSG…GYVL), and 170-190 (FFAL…VHII). His75 and His89 together coordinate heme b. Residues His174 and His188 each contribute to the heme b site. Residue His193 participates in a ubiquinone binding. A run of 4 helical transmembrane segments spans residues 218–238 (YKDM…LSFS), 280–300 (LGGT…PFTH), 312–332 (LSQI…WTAS), and 339–358 (FITI…ILTP).

This sequence belongs to the cytochrome b family. In terms of assembly, the cytochrome bc1 complex contains 3 respiratory subunits (MT-CYB, CYC1 and UQCRFS1), 2 core proteins (UQCRC1 and UQCRC2) and probably 6 low-molecular weight proteins. Heme b serves as cofactor.

It is found in the mitochondrion inner membrane. In terms of biological role, component of the ubiquinol-cytochrome c reductase complex (complex III or cytochrome b-c1 complex) that is part of the mitochondrial respiratory chain. The b-c1 complex mediates electron transfer from ubiquinol to cytochrome c. Contributes to the generation of a proton gradient across the mitochondrial membrane that is then used for ATP synthesis. The protein is Cytochrome b (MT-CYB) of Naja kaouthia (Monocled cobra).